The primary structure comprises 613 residues: MKSHQGHQKKRRMREMGFSTLLLGASLLLPVSVSASAPPSIYSRPYDSSPFLSPQIPLEDLSSLSGTHEFTLRHIFHRGTYQHPDLHRRLDIQPHTQLWVLSEDGTDKEAAEFDTPLIASSHPVTIQRLADRRPSVIEEHLLAARMSGSASVLSESDWVMDTLAGPDVTDKNSVLTFAKMTANDYIQEPDTEDWQDIHGRFNYSSSFGWQTDGLRGHIYADKTNSTIVISLKGTSPALFDGAGTTTNDKLNDNLYFSCCCGQGGSYLWRQVCDCQKSAFTANLTCIIEAMNDENRYYRAALDLYSNVTELYPDANVWLTGHSLGGAMTSLLGLTYGLPAVTFEAVPEALPAARLGLPSPPGHDPRLPQSRRYTGAYHFGHTADPVYMGTCNGVSSVCTWGGYAMESACHTGQMCVYDTVDDKGWRVAIGTHRIKAVISDVLEVYDDVPQCAPEEECYDCELWKFFRSNGSEHTTTTTTTTTTTTTPPSTSTSTCKTPGWWGCLDESTTTTATSTSTTSTSTTTCKTPGWFGCKDPTTSTTATPEPSLTTTLPLMTSTTCAHPGWFGCRDPTSPTSTPTQTPPPGDTTSCESPGFFWGCWDPKTTSDHPITTPP.

Residues 1 to 20 lie on the Cytoplasmic side of the membrane; that stretch reads MKSHQGHQKKRRMREMGFST. Residues 21–43 traverse the membrane as a helical; Signal-anchor for type II membrane protein segment; sequence LLLGASLLLPVSVSASAPPSIYS. Over 44 to 613 the chain is Lumenal; the sequence is RPYDSSPFLS…TSDHPITTPP (570 aa). N-linked (GlcNAc...) asparagine glycosylation is found at Asn-202, Asn-224, Asn-282, and Asn-306. The active-site Charge relay system is Ser-322. Asn-468 carries N-linked (GlcNAc...) asparagine glycosylation. The disordered stretch occupies residues 472 to 492; sequence HTTTTTTTTTTTTTPPSTSTS. Residues 473-492 show a composition bias toward low complexity; sequence TTTTTTTTTTTTTPPSTSTS.

It belongs to the AB hydrolase superfamily. Lipase family. Binds to both phosphatidylinositol (PI) and phosphatidylinositol 3,5-bisphosphate (PIP2).

It localises to the endosome. The protein resides in the multivesicular body membrane. It is found in the prevacuolar compartment membrane. It carries out the reaction a triacylglycerol + H2O = a diacylglycerol + a fatty acid + H(+). In terms of biological role, lipase which is essential for lysis of subvacuolar cytoplasm to vacuole targeted bodies and intravacuolar autophagic bodies. Involved in the lysis of intravacuolar multivesicular body (MVB) vesicles. The intravacuolar membrane disintegration by atg15 is critical to life span extension. The polypeptide is Putative lipase atg15 (atg15) (Aspergillus terreus (strain NIH 2624 / FGSC A1156)).